Here is a 209-residue protein sequence, read N- to C-terminus: Small ribosomal subunit protein uS4 (209 aa).

The tract at residues 23-46 (SRNPLLKKPHPPGQHGMQRKKKSD) is disordered. The 61-residue stretch at 93 to 153 (CRLDNMVYRM…EKSKRLQSVK (61 aa)) folds into the S4 RNA-binding domain.

The protein belongs to the universal ribosomal protein uS4 family. In terms of assembly, part of the 30S ribosomal subunit. Contacts protein S5. The interaction surface between S4 and S5 is involved in control of translational fidelity.

Functionally, one of the primary rRNA binding proteins, it binds directly to 16S rRNA where it nucleates assembly of the body of the 30S subunit. With S5 and S12 plays an important role in translational accuracy. The chain is Small ribosomal subunit protein uS4 from Chlamydia pneumoniae (Chlamydophila pneumoniae).